Reading from the N-terminus, the 234-residue chain is GTP:AMP phosphotransferase, mitochondrial (234 aa).

GTP is bound at residue 24-29 (GSGKGT). The segment at 45-74 (SSGDILRQEIKSESTLGREATTYIAQGKLL) is NMP. AMP is bound by residues S46, R51, 72–74 (KLL), 103–106 (GFPR), and Q110. Positions 144–181 (NRYVHVPSGRVYNLQYNPPKVPGLDDITGEPLTKRLDD) are LID. Residues R145 and 154-155 (VY) contribute to the GTP site. The AMP site is built by R178 and R189. S218 lines the GTP pocket.

This sequence belongs to the adenylate kinase family. AK3 subfamily. As to quaternary structure, monomer.

It is found in the mitochondrion matrix. The catalysed reaction is a ribonucleoside 5'-triphosphate + AMP = a ribonucleoside 5'-diphosphate + ADP. Involved in maintaining the homeostasis of cellular nucleotides by catalyzing the interconversion of nucleoside phosphates. Has GTP:AMP phosphotransferase and ITP:AMP phosphotransferase activities. Does not accept ATP as phosphate donor. This Saccharomyces cerevisiae (Baker's yeast) protein is GTP:AMP phosphotransferase, mitochondrial.